We begin with the raw amino-acid sequence, 356 residues long: Histidinol-phosphate aminotransferase (356 aa).

Residue Lys-217 is modified to N6-(pyridoxal phosphate)lysine.

It belongs to the class-II pyridoxal-phosphate-dependent aminotransferase family. Histidinol-phosphate aminotransferase subfamily. In terms of assembly, homodimer. It depends on pyridoxal 5'-phosphate as a cofactor.

The enzyme catalyses L-histidinol phosphate + 2-oxoglutarate = 3-(imidazol-4-yl)-2-oxopropyl phosphate + L-glutamate. It participates in amino-acid biosynthesis; L-histidine biosynthesis; L-histidine from 5-phospho-alpha-D-ribose 1-diphosphate: step 7/9. The protein is Histidinol-phosphate aminotransferase of Chromobacterium violaceum (strain ATCC 12472 / DSM 30191 / JCM 1249 / CCUG 213 / NBRC 12614 / NCIMB 9131 / NCTC 9757 / MK).